Consider the following 485-residue polypeptide: Glutamate--tRNA ligase (485 aa).

The 'HIGH' region motif lies at 11 to 21 (PSPTGHLHIGN). Positions 252-256 (KLSKR) match the 'KMSKS' region motif. Lys-255 serves as a coordination point for ATP.

This sequence belongs to the class-I aminoacyl-tRNA synthetase family. Glutamate--tRNA ligase type 1 subfamily. Monomer.

Its subcellular location is the cytoplasm. It catalyses the reaction tRNA(Glu) + L-glutamate + ATP = L-glutamyl-tRNA(Glu) + AMP + diphosphate. Catalyzes the attachment of glutamate to tRNA(Glu) in a two-step reaction: glutamate is first activated by ATP to form Glu-AMP and then transferred to the acceptor end of tRNA(Glu). This is Glutamate--tRNA ligase from Bacillus thuringiensis (strain Al Hakam).